The following is a 428-amino-acid chain: L-lysine N6-monooxygenase MbtG (428 aa).

An N-terminal signal peptide occupies residues 1 to 20 (MSTLAILGAGAKAVAVAAKA).

Belongs to the lysine N(6)-hydroxylase/L-ornithine N(5)-oxygenase family. FAD serves as cofactor.

It catalyses the reaction L-lysine + NADPH + O2 = N(6)-hydroxy-L-lysine + NADP(+) + H2O. It functions in the pathway siderophore biosynthesis; mycobactin biosynthesis. Flavoprotein monooxygenase required for N-hydroxylation of the two acylated lysine residues during mycobactin assembly, thus producing the hydroxamate groups necessary for iron sequestration. Is also able, but less efficiently, to hydroxylate L-lysine (non acylated) in vitro. This is L-lysine N6-monooxygenase MbtG (mbtG) from Mycolicibacterium paratuberculosis (strain ATCC BAA-968 / K-10) (Mycobacterium paratuberculosis).